A 615-amino-acid polypeptide reads, in one-letter code: uncharacterized protein (615 aa).

Belongs to the NodU/CmcH family.

This is an uncharacterized protein from Synechocystis sp. (strain ATCC 27184 / PCC 6803 / Kazusa).